The primary structure comprises 174 residues: uncharacterized protein (174 aa).

This sequence belongs to the gamma-class carbonic anhydrase family.

This is an uncharacterized protein from Pseudomonas aeruginosa (strain ATCC 15692 / DSM 22644 / CIP 104116 / JCM 14847 / LMG 12228 / 1C / PRS 101 / PAO1).